The chain runs to 404 residues: Phosphoglycerate kinase (404 aa).

Substrate is bound by residues 22–24, Arg-37, 60–63, Arg-120, and Arg-160; these read DFN and HLGR. ATP is bound by residues Lys-215, Glu-333, and 360–363; that span reads GGDS.

Belongs to the phosphoglycerate kinase family. As to quaternary structure, monomer.

Its subcellular location is the cytoplasm. It catalyses the reaction (2R)-3-phosphoglycerate + ATP = (2R)-3-phospho-glyceroyl phosphate + ADP. The protein operates within carbohydrate degradation; glycolysis; pyruvate from D-glyceraldehyde 3-phosphate: step 2/5. In Latilactobacillus sakei subsp. sakei (strain 23K) (Lactobacillus sakei subsp. sakei), this protein is Phosphoglycerate kinase.